Consider the following 185-residue polypeptide: Elongation factor P (185 aa).

It belongs to the elongation factor P family.

It is found in the cytoplasm. Its pathway is protein biosynthesis; polypeptide chain elongation. In terms of biological role, involved in peptide bond synthesis. Stimulates efficient translation and peptide-bond synthesis on native or reconstituted 70S ribosomes in vitro. Probably functions indirectly by altering the affinity of the ribosome for aminoacyl-tRNA, thus increasing their reactivity as acceptors for peptidyl transferase. The protein is Elongation factor P of Bacillus cereus (strain G9842).